Reading from the N-terminus, the 992-residue chain is UPF0182 protein Mb3215c (992 aa).

Helical transmembrane passes span 17 to 39 (RILI…LIDA), 59 to 81 (LATR…FGGL), 113 to 135 (LVGI…SYWA), 169 to 191 (LMLS…AHYI), 212 to 229 (LVSL…AYWL), 255 to 277 (VLPA…FSAI), and 284 to 306 (IPAI…WPLI). The segment at 906-938 (PTEAAVPPSPAANPPPPASGPQPPPVTAAPPVP) is disordered. Residues 912–938 (PPSPAANPPPPASGPQPPPVTAAPPVP) show a composition bias toward pro residues.

Belongs to the UPF0182 family.

It localises to the cell membrane. The sequence is that of UPF0182 protein Mb3215c from Mycobacterium bovis (strain ATCC BAA-935 / AF2122/97).